A 447-amino-acid chain; its full sequence is Protein O-GlcNAcase (447 aa).

The GH84 domain maps to 1 to 277; it reads MLTGVIEGFY…TTGAYLADPD (277 aa). The a protein site is built by glycine 8, lysine 39, and aspartate 115. Aspartate 116 (proton donor) is an active-site residue. Residues tyrosine 160, 219–221, aspartate 226, and asparagine 254 each bind a protein; that span reads WDN.

It belongs to the glycosyl hydrolase 84 family.

The catalysed reaction is 3-O-(N-acetyl-beta-D-glucosaminyl)-L-seryl-[protein] + H2O = N-acetyl-D-glucosamine + L-seryl-[protein]. It catalyses the reaction 3-O-(N-acetyl-beta-D-glucosaminyl)-L-threonyl-[protein] + H2O = L-threonyl-[protein] + N-acetyl-D-glucosamine. Its activity is regulated as follows. Inhibited by PUGNac (O-(2-acetamido-2-deoxy-D-glucopyranosylidene)amino-N-phenylcarbamate). Its function is as follows. Cleaves GlcNAc from O-glycosylated proteins. Can use p-nitrophenyl-beta-GlcNAc and 4-methylumbelliferone-GlcNAc as substrate (in vitro). The sequence is that of Protein O-GlcNAcase from Oceanicola granulosus (strain ATCC BAA-861 / DSM 15982 / KCTC 12143 / HTCC2516).